We begin with the raw amino-acid sequence, 56 residues long: Small ribosomal subunit protein uS14 (56 aa).

Zn(2+) contacts are provided by cysteine 21, cysteine 24, cysteine 39, and cysteine 42.

Belongs to the universal ribosomal protein uS14 family. Component of the 40S small ribosomal subunit. The cofactor is Zn(2+).

The protein localises to the cytoplasm. It is found in the cytosol. Its subcellular location is the rough endoplasmic reticulum. The protein is Small ribosomal subunit protein uS14 (RpS29) of Lysiphlebus testaceipes (Greenbugs aphid parastoid).